A 139-amino-acid polypeptide reads, in one-letter code: Nuclear transcription factor Y subunit B-4 (139 aa).

The DNA-binding element occupies Leu8–Gly14. Residues Val35–Val46 form a subunit association domain (SAD) region. A compositionally biased stretch (basic and acidic residues) spans Tyr90 to Thr115. The tract at residues Tyr90–Arg139 is disordered. Residues Arg116–Lys125 are compositionally biased toward polar residues.

The protein belongs to the NFYB/HAP3 subunit family. In terms of assembly, heterotrimeric transcription factor composed of three components, NF-YA, NF-YB and NF-YC. NF-YB and NF-YC must interact and dimerize for NF-YA association and DNA binding. As to expression, expressed in flowers, siliques and young rosettes.

Its subcellular location is the nucleus. Component of the NF-Y/HAP transcription factor complex. The NF-Y complex stimulates the transcription of various genes by recognizing and binding to a CCAAT motif in promoters. The protein is Nuclear transcription factor Y subunit B-4 (NFYB4) of Arabidopsis thaliana (Mouse-ear cress).